We begin with the raw amino-acid sequence, 72 residues long: MKVLLVRLIKGYKIFISPILPPSCRFQPTCSEYAMEAIERFGIFKGTAMAVMRILRCHPFHPGGYDPVPPKK.

Belongs to the UPF0161 family.

It localises to the cell inner membrane. Functionally, could be involved in insertion of integral membrane proteins into the membrane. The polypeptide is Putative membrane protein insertion efficiency factor (Trichodesmium erythraeum (strain IMS101)).